The sequence spans 161 residues: Transcriptional repressor NrdR (161 aa).

The span at 1 to 11 (MQCPHCQHHNS) shows a compositional bias: basic residues. Residues 1-21 (MQCPHCQHHNSRVLESRSSEG) are disordered. The segment at 3–34 (CPHCQHHNSRVLESRSSEGGQSIRRRRECLEC) is a zinc-finger region. The region spanning 49–139 (VTVIKQDGER…VYGRFQGIAD (91 aa)) is the ATP-cone domain.

This sequence belongs to the NrdR family. Zn(2+) is required as a cofactor.

In terms of biological role, negatively regulates transcription of bacterial ribonucleotide reductase nrd genes and operons by binding to NrdR-boxes. In Synechocystis sp. (strain ATCC 27184 / PCC 6803 / Kazusa), this protein is Transcriptional repressor NrdR.